We begin with the raw amino-acid sequence, 491 residues long: Glycogen synthase 1 (491 aa).

Lys15 is a binding site for ADP-alpha-D-glucose.

The protein belongs to the glycosyltransferase 1 family. Bacterial/plant glycogen synthase subfamily.

It catalyses the reaction [(1-&gt;4)-alpha-D-glucosyl](n) + ADP-alpha-D-glucose = [(1-&gt;4)-alpha-D-glucosyl](n+1) + ADP + H(+). It participates in glycan biosynthesis; glycogen biosynthesis. Its function is as follows. Synthesizes alpha-1,4-glucan chains using ADP-glucose. This is Glycogen synthase 1 from Synechococcus sp. (strain JA-2-3B'a(2-13)) (Cyanobacteria bacterium Yellowstone B-Prime).